The sequence spans 405 residues: Type II secretion system protein F (405 aa).

The Cytoplasmic segment spans residues 1-168 (MAAFEYLALD…QRQQSRQKIQ (168 aa)). Ca(2+) contacts are provided by Thr97, Glu151, and Asp155. A helical transmembrane segment spans residues 169 to 189 (LALLYPVILMVASLAIVGFLL). Topologically, residues 190-219 (GYVVPDVVRVFIDSGQTLPLLTRVLIGVSD) are periplasmic. A helical membrane pass occupies residues 220–239 (WVKAWGALAFVAAIGGVIGF). The Cytoplasmic portion of the chain corresponds to 240–376 (RYALRKDAFR…IGLMVGLFEP (137 aa)). Residues 377 to 397 (FMLIFMGAVVLVIVLAILLPI) traverse the membrane as a helical segment. Residues 398–405 (LSLNQLVG) lie on the Periplasmic side of the membrane.

Belongs to the GSP F family. In terms of assembly, type II secretion system is composed of four main components: the outer membrane complex, the inner membrane complex, the cytoplasmic secretion ATPase and the periplasm-spanning pseudopilus. Homodimer. Interacts with XcpR/GspE and XcpY/GspL components.

The protein resides in the cell inner membrane. In terms of biological role, component of the type II secretion system inner membrane complex required for the energy-dependent secretion of extracellular factors such as proteases and toxins from the periplasm. The protein is Type II secretion system protein F (xcpS) of Pseudomonas aeruginosa (strain ATCC 15692 / DSM 22644 / CIP 104116 / JCM 14847 / LMG 12228 / 1C / PRS 101 / PAO1).